We begin with the raw amino-acid sequence, 446 residues long: Exodeoxyribonuclease 7 large subunit (446 aa).

This sequence belongs to the XseA family. As to quaternary structure, heterooligomer composed of large and small subunits.

It localises to the cytoplasm. The enzyme catalyses Exonucleolytic cleavage in either 5'- to 3'- or 3'- to 5'-direction to yield nucleoside 5'-phosphates.. In terms of biological role, bidirectionally degrades single-stranded DNA into large acid-insoluble oligonucleotides, which are then degraded further into small acid-soluble oligonucleotides. The chain is Exodeoxyribonuclease 7 large subunit from Ligilactobacillus salivarius (strain UCC118) (Lactobacillus salivarius).